Consider the following 366-residue polypeptide: Peptide chain release factor 2 (366 aa).

N5-methylglutamine is present on Gln-253.

It belongs to the prokaryotic/mitochondrial release factor family. Post-translationally, methylated by PrmC. Methylation increases the termination efficiency of RF2.

It is found in the cytoplasm. Functionally, peptide chain release factor 2 directs the termination of translation in response to the peptide chain termination codons UGA and UAA. The chain is Peptide chain release factor 2 from Yersinia pestis.